We begin with the raw amino-acid sequence, 443 residues long: ATP-dependent protease ATPase subunit HslU (443 aa).

ATP-binding positions include isoleucine 20, 62-67, aspartate 255, glutamate 321, and arginine 393; that span reads GVGKTE.

It belongs to the ClpX chaperone family. HslU subfamily. A double ring-shaped homohexamer of HslV is capped on each side by a ring-shaped HslU homohexamer. The assembly of the HslU/HslV complex is dependent on binding of ATP.

Its subcellular location is the cytoplasm. Functionally, ATPase subunit of a proteasome-like degradation complex; this subunit has chaperone activity. The binding of ATP and its subsequent hydrolysis by HslU are essential for unfolding of protein substrates subsequently hydrolyzed by HslV. HslU recognizes the N-terminal part of its protein substrates and unfolds these before they are guided to HslV for hydrolysis. The chain is ATP-dependent protease ATPase subunit HslU from Helicobacter pylori (strain J99 / ATCC 700824) (Campylobacter pylori J99).